Reading from the N-terminus, the 528-residue chain is Probable serine/threonine-protein kinase DDB_G0282417 (528 aa).

The segment covering 49 to 77 (NNNNNNNNNNNNNNNNNNNNNNNNNNKNN) has biased composition (low complexity). Residues 49–84 (NNNNNNNNNNNNNNNNNNNNNNNNNNKNNNDGDDAA) are disordered. A Protein kinase domain is found at 136–466 (QQNRVLIGEG…ESLINNHQYS (331 aa)). ATP-binding positions include 142 to 150 (IGEGHYGKV) and K166. The active-site Proton acceptor is D266.

The protein belongs to the protein kinase superfamily. Ser/Thr protein kinase family.

It catalyses the reaction L-seryl-[protein] + ATP = O-phospho-L-seryl-[protein] + ADP + H(+). The enzyme catalyses L-threonyl-[protein] + ATP = O-phospho-L-threonyl-[protein] + ADP + H(+). In Dictyostelium discoideum (Social amoeba), this protein is Probable serine/threonine-protein kinase DDB_G0282417.